A 379-amino-acid polypeptide reads, in one-letter code: MEKPLRIGIIAGELSGDTLGEGFIKAVKERYPNAEFVGIGGPKMIAQGCESLFDMEELAVMGLVEVLGRLPRLLKVKAELVKYFTQNPPDVFVGIDAPDFNLRLELDLKQAGIKTVHYVSPSVWAWRQKRIFKIEAATNLVLAFLPFEKAFYDKFNVPCEFIGHTLADAIPLQSEQAPARDLLGLEQDKKWLAVLPGSRGSELKMLSQPFIETCKLLHQKYPGLGFVVALVNQKRREQFEQAWKEHAPELDFKLVDDTARNVITASDAVMLASGTVALECMLLKRPMVVGYRVNTFTAFLAKRLLKTKYVSLPNILADDELVKEYLQDDCTPDNLFNEVSRLLESDNKPMLDKFTEMHHWIRKDADQQAANAVLKLIEK.

Belongs to the LpxB family.

It catalyses the reaction a lipid X + a UDP-2-N,3-O-bis[(3R)-3-hydroxyacyl]-alpha-D-glucosamine = a lipid A disaccharide + UDP + H(+). It participates in bacterial outer membrane biogenesis; LPS lipid A biosynthesis. Functionally, condensation of UDP-2,3-diacylglucosamine and 2,3-diacylglucosamine-1-phosphate to form lipid A disaccharide, a precursor of lipid A, a phosphorylated glycolipid that anchors the lipopolysaccharide to the outer membrane of the cell. This Vibrio parahaemolyticus serotype O3:K6 (strain RIMD 2210633) protein is Lipid-A-disaccharide synthase.